A 341-amino-acid chain; its full sequence is NADH-quinone oxidoreductase subunit H 1 (341 aa).

A run of 8 helical transmembrane segments spans residues 13–33, 82–102, 115–135, 161–181, 190–210, 248–268, 277–297, and 317–337; these read LVVIGQSLLLLILLLITIAYI, GVFLLAPLVSCVLALAAWAVI, VGVLYILAVSSLSVYGIIMAG, IGFVIIAVLLCVGSLNLTAIV, LLGWYWLPLFPVFVIFYVSAL, YVAITTMCAMGAILFLGGWLP, WVPGIIWFMLKGFFMFFLFAM, and VFLPLSLVMVVIVAGVLQFAG.

Belongs to the complex I subunit 1 family. NDH-1 is composed of 14 different subunits. Subunits NuoA, H, J, K, L, M, N constitute the membrane sector of the complex.

The protein resides in the cell inner membrane. It catalyses the reaction a quinone + NADH + 5 H(+)(in) = a quinol + NAD(+) + 4 H(+)(out). Its function is as follows. NDH-1 shuttles electrons from NADH, via FMN and iron-sulfur (Fe-S) centers, to quinones in the respiratory chain. The immediate electron acceptor for the enzyme in this species is believed to be ubiquinone. Couples the redox reaction to proton translocation (for every two electrons transferred, four hydrogen ions are translocated across the cytoplasmic membrane), and thus conserves the redox energy in a proton gradient. This subunit may bind ubiquinone. In Rhodopseudomonas palustris (strain BisB18), this protein is NADH-quinone oxidoreductase subunit H 1.